A 327-amino-acid polypeptide reads, in one-letter code: 4-hydroxy-2-oxoglutarate aldolase, mitochondrial (327 aa).

Residues 1-25 constitute a mitochondrion transit peptide; that stretch reads MLGPQVWSSVRQGLSRSLSRNVGVW. Substrate is bound at residue 77 to 78; it reads SN. Lys196 (schiff-base intermediate with substrate) is an active-site residue. Residues Ser198 and Gly222 each coordinate substrate.

Belongs to the DapA family. Homotetramer.

The protein localises to the mitochondrion. The catalysed reaction is (4S)-4-hydroxy-2-oxoglutarate = glyoxylate + pyruvate. The enzyme catalyses (4R)-4-hydroxy-2-oxoglutarate = glyoxylate + pyruvate. Inhibited by divalent cations. Functionally, catalyzes the final step in the metabolic pathway of hydroxyproline. The sequence is that of 4-hydroxy-2-oxoglutarate aldolase, mitochondrial (HOGA1) from Homo sapiens (Human).